Reading from the N-terminus, the 254-residue chain is N-acetylglucosaminyldiphosphoundecaprenol N-acetyl-beta-D-mannosaminyltransferase (254 aa).

The protein belongs to the glycosyltransferase 26 family. TagA/TarA subfamily.

The catalysed reaction is UDP-N-acetyl-alpha-D-mannosamine + N-acetyl-alpha-D-glucosaminyl-di-trans,octa-cis-undecaprenyl diphosphate = N-acetyl-beta-D-mannosaminyl-(1-&gt;4)-N-acetyl-alpha-D-glucosaminyl di-trans,octa-cis-undecaprenyl diphosphate + UDP + H(+). The protein operates within cell wall biogenesis; poly(ribitol phosphate) teichoic acid biosynthesis. In terms of biological role, catalyzes the conversion of GlcNAc-PP-undecaprenol into ManNAc-GlcNAc-PP-undecaprenol, the first committed lipid intermediate in the de novo synthesis of teichoic acid. This is N-acetylglucosaminyldiphosphoundecaprenol N-acetyl-beta-D-mannosaminyltransferase from Staphylococcus aureus (strain NCTC 8325 / PS 47).